Consider the following 427-residue polypeptide: Putative F-box protein At4g10740 (427 aa).

Residues 2–47 (RTTMSNLPKELVEDIVSRVPLHCLRAMRLTCKNWNALLESQSFKKM) form the F-box domain.

This chain is Putative F-box protein At4g10740, found in Arabidopsis thaliana (Mouse-ear cress).